Here is a 149-residue protein sequence, read N- to C-terminus: Large ribosomal subunit protein uL15 (149 aa).

Basic residues-rich tracts occupy residues 1-14 and 21-30; these read MPTH…HRGH and RVGKHRKHPG. A disordered region spans residues 1 to 42; sequence MPTHLSKTRKHRGHVSAGHGRVGKHRKHPGGRGLAGGQHHHR.

It belongs to the universal ribosomal protein uL15 family.

In Blumeria hordei (Barley powdery mildew), this protein is Large ribosomal subunit protein uL15.